The chain runs to 185 residues: Adenine phosphoribosyltransferase (185 aa).

The protein belongs to the purine/pyrimidine phosphoribosyltransferase family. As to quaternary structure, homodimer.

It localises to the cytoplasm. It catalyses the reaction AMP + diphosphate = 5-phospho-alpha-D-ribose 1-diphosphate + adenine. Its pathway is purine metabolism; AMP biosynthesis via salvage pathway; AMP from adenine: step 1/1. Its function is as follows. Catalyzes a salvage reaction resulting in the formation of AMP, that is energically less costly than de novo synthesis. The polypeptide is Adenine phosphoribosyltransferase (Nocardioides sp. (strain ATCC BAA-499 / JS614)).